A 328-amino-acid polypeptide reads, in one-letter code: Transcription initiation factor IIE subunit beta (328 aa).

Residues 32–105 (QKKTNDTVIT…SSPSKKVRPG (74 aa)) form a disordered region. A Phosphoserine modification is found at Ser52. The span at 85 to 94 (LDDDDDDEDF) shows a compositional bias: acidic residues. A phosphoserine mark is found at Ser97 and Ser106. Residues 113–187 (QANQTDISKS…FKYLSTYDVH (75 aa)) constitute a DNA-binding region (TFIIE beta).

It belongs to the TFIIE beta subunit family. In terms of assembly, TFIIE is a tetramer of two alpha (TFA1) and two beta (TFA2) subunits.

Its subcellular location is the nucleus. Recruits TFIIH to the initiation complex and stimulates the RNA polymerase II C-terminal domain kinase and DNA-dependent ATPase activities of TFIIH. Both TFIIH and TFIIE are required for promoter clearance by RNA polymerase. The sequence is that of Transcription initiation factor IIE subunit beta (TFA2) from Saccharomyces cerevisiae (strain ATCC 204508 / S288c) (Baker's yeast).